A 517-amino-acid polypeptide reads, in one-letter code: Mitochondrial division protein fszA (517 aa).

Residues 60–64, 147–149, glutamate 178, arginine 182, and aspartate 225 contribute to the GTP site; these read GGGCN and GTG. A disordered region spans residues 496-517; that stretch reads FTNGNNNKPYNNNKNTPGSNYE. A compositionally biased stretch (low complexity) spans 497 to 517; that stretch reads TNGNNNKPYNNNKNTPGSNYE.

It belongs to the FtsZ family.

It is found in the mitochondrion matrix. In terms of biological role, probably involved in mitochondrion division process. When overexpressed, induces mitochondrial tubule formation. Binds to and hydrolyzes GTP. This chain is Mitochondrial division protein fszA (fszA), found in Dictyostelium discoideum (Social amoeba).